The chain runs to 269 residues: Protein BASIC PENTACYSTEINE3 (269 aa).

The protein belongs to the BBR/BPC family. As to expression, expressed in seedlings, leaves and pistils. Detected in the base of flowers and tips of carpels, in petal vasculature, in anthers, in young rosette, in the lateral and primary roots, and in the gynobasal portion of the ovule.

The protein localises to the nucleus. Transcriptional regulator that specifically binds to GA-rich elements (GAGA-repeats) present in regulatory sequences of genes involved in developmental processes. This Arabidopsis thaliana (Mouse-ear cress) protein is Protein BASIC PENTACYSTEINE3 (BPC3).